The chain runs to 297 residues: Protein PecM (297 aa).

The next 10 membrane-spanning stretches (helical) occupy residues 6–26, 38–58, 60–80, 86–106, 116–136, 138–158, 167–187, 203–223, 231–251, and 261–281; these read FAFY…QFLP, ALPA…GWLW, LFVL…FAAY, VVAL…FLLL, VAAV…KAPL, PAGL…LVLT, MTML…ILPV, LAGY…MWFS, VIMS…GFLF, and LVGV…SLFS. EamA domains are found at residues 12-130 and 149-276; these read CVWG…LLIS and MSMA…IVQD.

It belongs to the EamA transporter family.

Its subcellular location is the cell membrane. Its function is as follows. Involved in pectinase, cellulase, and blue pigment regulation. The protein is Protein PecM (pecM) of Dickeya dadantii (strain 3937) (Erwinia chrysanthemi (strain 3937)).